Here is a 458-residue protein sequence, read N- to C-terminus: MSEPELKVSVSQLAPSDREGWLTKQGGSIRTWRRRWFVLKGKKLFYFKSKGDIEATGLIELEQNSFVKEEKDKDKKKKYMFTVGTSKRVFYIFAETETDMKQWMESIKRNLDGEGGMKSGGNDIVSSPKINSEPTPKVNQNGSAPEKSSLSSPRSKISNAKSIIPFLREEESKVLEFWQIWSESIPPQSDLQSGTAIEFHVATSIDMQKLTWRTAGPQNIFIQKMVDFFWNVGAPESEIDRLNDVGAIINPVKIGSWIDMSDKGGMDGGWYFPVDIPLKLAIEASDAGEPTRKLSEWAESNEVVNCYSIGRDMGAAPPRQTETRFKLPGPDFIAQLNLAVDAFKTFEFPPIPSNALEILYQSSNTLEAGGLCLSVITSSEGFVRLGLLIPKPTRDVVGQLCEIGQANRERISKFETALGGCGPAFVEFQYLQKGFGYTVYKEGFDIVFHYMVGEDQSE.

The 98-residue stretch at 15–112 folds into the PH domain; sequence PSDREGWLTK…WMESIKRNLD (98 aa). The disordered stretch occupies residues 111 to 154; the sequence is LDGEGGMKSGGNDIVSSPKINSEPTPKVNQNGSAPEKSSLSSPR. The segment covering 124-142 has biased composition (polar residues); the sequence is IVSSPKINSEPTPKVNQNG. Low complexity predominate over residues 143 to 154; it reads SAPEKSSLSSPR.

The polypeptide is PH domain-containing protein DDB_G0274775 (Dictyostelium discoideum (Social amoeba)).